Consider the following 766-residue polypeptide: Signal transducer and activator of transcription 3.2 (766 aa).

The Essential for nuclear import signature appears at 150–162 (DVRKKVQDLEQKM). Residues 580–670 (WNEGYIIGFI…DATNILVSPL (91 aa)) enclose the SH2 domain. Ser-725 carries the post-translational modification Phosphoserine; by NLK.

It belongs to the transcription factor STAT family. Forms a homodimer or a heterodimer with a related family member. Interacts with nlk.2. In terms of processing, phosphorylation of both tyrosine and serine residues, together with dimerization, is required for mesoderm induction.

The protein localises to the cytoplasm. Its subcellular location is the nucleus. Functionally, transcription factor that binds to target promoter sequences and activates transcription upon il6st/gp130 stimulation. Mediates ventralization of embryos, at least in part via inhibition of smad2 signaling. Required for hairy2 to induce dll1/delta1 and promote neural crest cell proliferation and differentiation. Involved in TGFbeta-mediated mesoderm induction in early embryos, acting downstream of map3k7/tak1 and nlk.2. The chain is Signal transducer and activator of transcription 3.2 (stat3.2) from Xenopus laevis (African clawed frog).